Reading from the N-terminus, the 156-residue chain is Ribosome maturation factor RimP (156 aa).

This sequence belongs to the RimP family.

It localises to the cytoplasm. Its function is as follows. Required for maturation of 30S ribosomal subunits. The polypeptide is Ribosome maturation factor RimP (Fusobacterium nucleatum subsp. nucleatum (strain ATCC 25586 / DSM 15643 / BCRC 10681 / CIP 101130 / JCM 8532 / KCTC 2640 / LMG 13131 / VPI 4355)).